A 353-amino-acid polypeptide reads, in one-letter code: UDP-N-acetylglucosamine--N-acetylmuramyl-(pentapeptide) pyrophosphoryl-undecaprenol N-acetylglucosamine transferase (353 aa).

UDP-N-acetyl-alpha-D-glucosamine contacts are provided by residues 10–12 (TGG), asparagine 124, serine 183, and glutamine 283.

The protein belongs to the glycosyltransferase 28 family. MurG subfamily.

It localises to the cell inner membrane. The enzyme catalyses di-trans,octa-cis-undecaprenyl diphospho-N-acetyl-alpha-D-muramoyl-L-alanyl-D-glutamyl-meso-2,6-diaminopimeloyl-D-alanyl-D-alanine + UDP-N-acetyl-alpha-D-glucosamine = di-trans,octa-cis-undecaprenyl diphospho-[N-acetyl-alpha-D-glucosaminyl-(1-&gt;4)]-N-acetyl-alpha-D-muramoyl-L-alanyl-D-glutamyl-meso-2,6-diaminopimeloyl-D-alanyl-D-alanine + UDP + H(+). The protein operates within cell wall biogenesis; peptidoglycan biosynthesis. Functionally, cell wall formation. Catalyzes the transfer of a GlcNAc subunit on undecaprenyl-pyrophosphoryl-MurNAc-pentapeptide (lipid intermediate I) to form undecaprenyl-pyrophosphoryl-MurNAc-(pentapeptide)GlcNAc (lipid intermediate II). This chain is UDP-N-acetylglucosamine--N-acetylmuramyl-(pentapeptide) pyrophosphoryl-undecaprenol N-acetylglucosamine transferase, found in Helicobacter pylori (strain J99 / ATCC 700824) (Campylobacter pylori J99).